Here is a 229-residue protein sequence, read N- to C-terminus: Cytidylate kinase (229 aa).

Residue G12 to T20 coordinates ATP.

This sequence belongs to the cytidylate kinase family. Type 1 subfamily.

It is found in the cytoplasm. It catalyses the reaction CMP + ATP = CDP + ADP. The enzyme catalyses dCMP + ATP = dCDP + ADP. This chain is Cytidylate kinase, found in Pseudomonas aeruginosa (strain LESB58).